The chain runs to 955 residues: Glycine dehydrogenase (decarboxylating) (955 aa).

Lysine 702 is subject to N6-(pyridoxal phosphate)lysine.

The protein belongs to the GcvP family. As to quaternary structure, the glycine cleavage system is composed of four proteins: P, T, L and H. Pyridoxal 5'-phosphate serves as cofactor.

The catalysed reaction is N(6)-[(R)-lipoyl]-L-lysyl-[glycine-cleavage complex H protein] + glycine + H(+) = N(6)-[(R)-S(8)-aminomethyldihydrolipoyl]-L-lysyl-[glycine-cleavage complex H protein] + CO2. Functionally, the glycine cleavage system catalyzes the degradation of glycine. The P protein binds the alpha-amino group of glycine through its pyridoxal phosphate cofactor; CO(2) is released and the remaining methylamine moiety is then transferred to the lipoamide cofactor of the H protein. This chain is Glycine dehydrogenase (decarboxylating), found in Stenotrophomonas maltophilia (strain R551-3).